The primary structure comprises 235 residues: Ion-translocating oxidoreductase complex subunit E (235 aa).

5 consecutive transmembrane segments (helical) span residues Leu-63–Phe-83, Ile-93–Ala-113, Thr-117–Gly-137, Ile-152–Leu-172, and Ser-206–Ile-226.

Belongs to the NqrDE/RnfAE family. The complex is composed of six subunits: RnfA, RnfB, RnfC, RnfD, RnfE and RnfG.

It is found in the cell inner membrane. Its function is as follows. Part of a membrane-bound complex that couples electron transfer with translocation of ions across the membrane. The sequence is that of Ion-translocating oxidoreductase complex subunit E from Haemophilus influenzae (strain 86-028NP).